Reading from the N-terminus, the 73-residue chain is uncharacterized protein (73 aa).

In terms of processing, N-glycosylated.

This is an uncharacterized protein from Saccharomyces cerevisiae (strain ATCC 204508 / S288c) (Baker's yeast).